Here is a 196-residue protein sequence, read N- to C-terminus: Holliday junction branch migration complex subunit RuvA (196 aa).

Residues 1-61 (MYEYFEGIVT…DTGITLYGFQ (61 aa)) form a domain I region. A domain II region spans residues 62–140 (SEDDKGLFLK…DYVARLDRQD (79 aa)). The tract at residues 141–149 (EEQGNISPA) is flexible linker. The tract at residues 149–196 (ALNDALLALIALGYTQKEVDRITTKLEEVNADTADQYIKKGLALLLKK) is domain III.

Belongs to the RuvA family. Homotetramer. Forms an RuvA(8)-RuvB(12)-Holliday junction (HJ) complex. HJ DNA is sandwiched between 2 RuvA tetramers; dsDNA enters through RuvA and exits via RuvB. An RuvB hexamer assembles on each DNA strand where it exits the tetramer. Each RuvB hexamer is contacted by two RuvA subunits (via domain III) on 2 adjacent RuvB subunits; this complex drives branch migration. In the full resolvosome a probable DNA-RuvA(4)-RuvB(12)-RuvC(2) complex forms which resolves the HJ.

The protein resides in the cytoplasm. Functionally, the RuvA-RuvB-RuvC complex processes Holliday junction (HJ) DNA during genetic recombination and DNA repair, while the RuvA-RuvB complex plays an important role in the rescue of blocked DNA replication forks via replication fork reversal (RFR). RuvA specifically binds to HJ cruciform DNA, conferring on it an open structure. The RuvB hexamer acts as an ATP-dependent pump, pulling dsDNA into and through the RuvAB complex. HJ branch migration allows RuvC to scan DNA until it finds its consensus sequence, where it cleaves and resolves the cruciform DNA. The sequence is that of Holliday junction branch migration complex subunit RuvA from Lactobacillus helveticus (strain DPC 4571).